Here is a 1582-residue protein sequence, read N- to C-terminus: Sca1 complex scaffold protein scaA (1582 aa).

Composition is skewed to low complexity over residues M1–T14 and L109–T131. Disordered regions lie at residues M1–K22 and G108–K147. The stretch at L4–G37 is one TPR 1 repeat. A TPR 2 repeat occupies I166–I199. The interval I246–V349 is disordered. 3 stretches are compositionally biased toward polar residues: residues T249 to R267, N288 to I310, and S318 to G332. S359 bears the Phosphoserine; by PKB mark. Positions R400 to G600 are gefA and gefH binding. 2 disordered regions span residues P468 to G493 and S686 to K734. Composition is skewed to gly residues over residues G478–G493 and Q694–S714. The segment covering G715–G726 has biased composition (low complexity). The stretch at M742 to L777 is one TPR 3 repeat. Over residues G864–I875 the composition is skewed to gly residues. The interval G864–P978 is disordered. Residues H903–G928 are compositionally biased toward low complexity. Over residues N940–L953 the composition is skewed to polar residues. Over residues G960–S972 the composition is skewed to low complexity. Positions F1000–N1400 are pppA and pho2B binding. The stretch at T1080–V1113 is one TPR 4 repeat.

Component of the Sca1 complex composed of at least gefA, gefH, scaA, phr, and the protein phosphatase 2A subunits pppA and pho2B. In terms of processing, phosphorylated at Ser-359 by PKB and PKBR1 is induced by chemoattractant.

It localises to the cell membrane. Component of the Sca1 complex, a regulator of cell motility, chemotaxis and signal relay. The Sca1 complex is recruited to the plasma membrane in a chemoattractant- and F-actin-dependent manner and is enriched at the leading edge of chemotaxing cells where it regulates F-actin dynamics and signal relay by controlling the activation of rasC and the downstream target of rapamycin complex 2 (TORC2)-Akt/protein kinase B (PKB) pathway. ScaA acts as a molecular scaffold, bringing together gefA, gefH and phr with PP2A. The polypeptide is Sca1 complex scaffold protein scaA (Dictyostelium discoideum (Social amoeba)).